We begin with the raw amino-acid sequence, 462 residues long: tRNA-2-methylthio-N(6)-dimethylallyladenosine synthase (462 aa).

In terms of domain architecture, MTTase N-terminal spans 18–138; sequence RKVFVKTYGC…LPNALARVRS (121 aa). [4Fe-4S] cluster is bound by residues Cys-27, Cys-63, Cys-101, Cys-179, Cys-183, and Cys-186. Residues 165–397 enclose the Radical SAM core domain; sequence RKRGVSAFLT…QALLSEQQYA (233 aa). The region spanning 400–462 is the TRAM domain; the sequence is DSMIGREMDV…TNSLIAQKLA (63 aa).

Belongs to the methylthiotransferase family. MiaB subfamily. In terms of assembly, monomer. [4Fe-4S] cluster is required as a cofactor.

The protein resides in the cytoplasm. It carries out the reaction N(6)-dimethylallyladenosine(37) in tRNA + (sulfur carrier)-SH + AH2 + 2 S-adenosyl-L-methionine = 2-methylsulfanyl-N(6)-dimethylallyladenosine(37) in tRNA + (sulfur carrier)-H + 5'-deoxyadenosine + L-methionine + A + S-adenosyl-L-homocysteine + 2 H(+). Functionally, catalyzes the methylthiolation of N6-(dimethylallyl)adenosine (i(6)A), leading to the formation of 2-methylthio-N6-(dimethylallyl)adenosine (ms(2)i(6)A) at position 37 in tRNAs that read codons beginning with uridine. The chain is tRNA-2-methylthio-N(6)-dimethylallyladenosine synthase from Brucella anthropi (strain ATCC 49188 / DSM 6882 / CCUG 24695 / JCM 21032 / LMG 3331 / NBRC 15819 / NCTC 12168 / Alc 37) (Ochrobactrum anthropi).